The chain runs to 179 residues: Inner membrane-spanning protein YciB (179 aa).

5 helical membrane-spanning segments follow: residues 22–42 (IYAATAALIVATAIVLIYSWV), 50–70 (MALITFVLVVVFGGLTLFFHN), 76–96 (WKVTVIYALFAGALLVSQWVM), 121–141 (LAWAVFFILCGLANIYIAFWL), and 149–169 (FKVFGLTALTLIFTLLSGIYI).

This sequence belongs to the YciB family.

It is found in the cell inner membrane. Functionally, plays a role in cell envelope biogenesis, maintenance of cell envelope integrity and membrane homeostasis. The polypeptide is Inner membrane-spanning protein YciB (Shigella boydii serotype 18 (strain CDC 3083-94 / BS512)).